Consider the following 368-residue polypeptide: Putative glutamate--cysteine ligase 2 (368 aa).

Belongs to the glutamate--cysteine ligase type 2 family. YbdK subfamily.

It catalyses the reaction L-cysteine + L-glutamate + ATP = gamma-L-glutamyl-L-cysteine + ADP + phosphate + H(+). In terms of biological role, ATP-dependent carboxylate-amine ligase which exhibits weak glutamate--cysteine ligase activity. This Pseudomonas putida (strain ATCC 47054 / DSM 6125 / CFBP 8728 / NCIMB 11950 / KT2440) protein is Putative glutamate--cysteine ligase 2.